The following is a 322-amino-acid chain: Probable 2-oxoglutarate-dependent dioxygenase AOP1 (322 aa).

Residues 165–271 (TYYLTRLMKY…RYSTGLFSIP (107 aa)) form the Fe2OG dioxygenase domain. Fe cation-binding residues include His195, Asp197, and His252. A 2-oxoglutarate-binding site is contributed by Arg262.

This sequence belongs to the iron/ascorbate-dependent oxidoreductase family. The cofactor is Fe(2+).

In terms of biological role, probable 2-oxoglutarate-dependent dioxygenase that may be involved in glucosinolates biosynthesis. May play a role in the production of aliphatic glucosinolates. This chain is Probable 2-oxoglutarate-dependent dioxygenase AOP1 (AOP1), found in Arabidopsis thaliana (Mouse-ear cress).